Consider the following 316-residue polypeptide: uncharacterized protein (316 aa).

This is an uncharacterized protein from Caenorhabditis elegans.